A 246-amino-acid polypeptide reads, in one-letter code: Small ribosomal subunit protein uS2 (246 aa).

The protein belongs to the universal ribosomal protein uS2 family.

This is Small ribosomal subunit protein uS2 from Burkholderia thailandensis (strain ATCC 700388 / DSM 13276 / CCUG 48851 / CIP 106301 / E264).